The primary structure comprises 333 residues: uncharacterized protein (333 aa).

It belongs to the polysaccharide synthase family.

This is an uncharacterized protein from Methanocaldococcus jannaschii (strain ATCC 43067 / DSM 2661 / JAL-1 / JCM 10045 / NBRC 100440) (Methanococcus jannaschii).